A 391-amino-acid chain; its full sequence is ATPase GET3C (391 aa).

The transit peptide at 1–50 (MAALLLLNRVSRSTSSISLHRVAGTLGFNSFNAQIHGDRISGTLFRVRSL) directs the protein to the mitochondrion. 77 to 84 (KGGVGKTS) contacts ATP. Asp-106 is an active-site residue. Asn-328 contacts ATP.

The protein belongs to the arsA ATPase family.

It localises to the mitochondrion matrix. It carries out the reaction ATP + H2O = ADP + phosphate + H(+). In Arabidopsis thaliana (Mouse-ear cress), this protein is ATPase GET3C.